A 93-amino-acid chain; its full sequence is Integration host factor subunit beta (93 aa).

Belongs to the bacterial histone-like protein family. In terms of assembly, heterodimer of an alpha and a beta chain.

Its function is as follows. This protein is one of the two subunits of integration host factor, a specific DNA-binding protein that functions in genetic recombination as well as in transcriptional and translational control. The chain is Integration host factor subunit beta (ihfB) from Mannheimia haemolytica (Pasteurella haemolytica).